Here is a 101-residue protein sequence, read N- to C-terminus: Small ribosomal subunit protein uS14 (101 aa).

It belongs to the universal ribosomal protein uS14 family. As to quaternary structure, part of the 30S ribosomal subunit. Contacts proteins S3 and S10.

In terms of biological role, binds 16S rRNA, required for the assembly of 30S particles and may also be responsible for determining the conformation of the 16S rRNA at the A site. The sequence is that of Small ribosomal subunit protein uS14 from Actinobacillus succinogenes (strain ATCC 55618 / DSM 22257 / CCUG 43843 / 130Z).